The chain runs to 911 residues: Leucine--tRNA ligase (911 aa).

Positions 42-52 (PYPSGKLHMGH) match the 'HIGH' region motif. The 'KMSKS' region motif lies at 659-663 (TMSKS). Lys-662 serves as a coordination point for ATP.

Belongs to the class-I aminoacyl-tRNA synthetase family.

Its subcellular location is the cytoplasm. The catalysed reaction is tRNA(Leu) + L-leucine + ATP = L-leucyl-tRNA(Leu) + AMP + diphosphate. This chain is Leucine--tRNA ligase, found in Delftia acidovorans (strain DSM 14801 / SPH-1).